A 129-amino-acid polypeptide reads, in one-letter code: Ribonuclease VapC12 (129 aa).

The Mg(2+) site is built by D5 and D94.

This sequence belongs to the PINc/VapC protein family. The cofactor is Mg(2+).

Its function is as follows. Toxic component of a type II toxin-antitoxin (TA) system. An RNase. The cognate antitoxin is VapB12. The protein is Ribonuclease VapC12 of Mycobacterium tuberculosis (strain CDC 1551 / Oshkosh).